Reading from the N-terminus, the 785-residue chain is Rho GTPase-activating protein 10 (785 aa).

The 256-residue stretch at 7 to 262 (EFSDCYLDSP…IRQNPKDHKR (256 aa)) folds into the BAR domain. A PH domain is found at 265–372 (QFTAEGYLYV…WLEVLGGKEA (108 aa)). The Rho-GAP domain occupies 389–574 (AQLDKMGFTI…ILIENHEKIF (186 aa)). The tract at residues 576 to 708 (TPPDATLPEP…PAVTPPSPKL (133 aa)) is disordered. The span at 584-595 (EPGPLSAPPNAP) shows a compositional bias: pro residues. Basic residues predominate over residues 598–608 (QSKRQGQRTKR). The segment covering 622 to 632 (GDRPSLPKEDT) has biased composition (basic and acidic residues). Residues 633 to 650 (PPSSLDSLSSPSPTTATA) are compositionally biased toward low complexity. Residues 675–697 (APSQARSSAVQWLNPQSPTTPSC) show a composition bias toward polar residues. An SH3 domain is found at 727–785 (IISRKARAVYPCEAEHSSELSFEIGAIFEDVQTSREPGWLEGTLNGKRGLIPQNYVKLL).

Interacts with PKN3. Interacts with caspase-activated PAK2 proteolytic fragment PAK-2p34; the interaction does not affect ARHGAP10 GTPase activation activity towards RHOA and CDC42. Interacts via its SH3 domain with PTK2/FAK1. Interacts with PTK2B/PYK2; the interaction negatively regulates ARHGAP10 GTPase-activating activity. Interacts with MICAL1 and WDR44; complex formation might transit from GRAF2/ARHGAP10-MICAL1 to GRAF2/ARHGAP10-WDR44 complexes.

Its subcellular location is the cytoplasm. The protein resides in the perinuclear region. It localises to the cell membrane. It is found in the endosome membrane. Functionally, GTPase-activating protein that catalyzes the conversion of active GTP-bound Rho GTPases to their inactive GDP-bound form, thus suppressing various Rho GTPase-mediated cellular processes. Also converts Cdc42 to an inactive GDP-bound state. Essential for PTKB2 regulation of cytoskeletal organization via Rho family GTPases. Inhibits PAK2 proteolytic fragment PAK-2p34 kinase activity and changes its localization from the nucleus to the perinuclear region. Stabilizes PAK-2p34 thereby increasing stimulation of cell death. Associates with MICAL1 on the endosomal membrane to promote Rab8-Rab10-dependent tubule extension. After dissociation with MICAL1, recruits WDR44 which connects the endoplasmic reticulum (ER) with the endosomal tubule, thereby participating in the export of a subset of neosynthesized proteins. In Bos taurus (Bovine), this protein is Rho GTPase-activating protein 10 (ARHGAP10).